The primary structure comprises 982 residues: Cell division cycle-associated protein 2 (982 aa).

The span at 75–87 shows a compositional bias: polar residues; that stretch reads VKTSSGKSTSSLQ. Residues 75 to 97 form a disordered region; sequence VKTSSGKSTSSLQKARRRSTVGV. Phosphoserine occurs at positions 100, 122, and 133. 2 disordered regions span residues 192–216 and 274–315; these read SGFPVNSSSKRRRISSQDSPDNYLS and TPLS…CGSS. 2 stretches are compositionally biased toward polar residues: residues 207-216 and 275-315; these read SQDSPDNYLS and PLSS…CGSS. A phosphoserine mark is found at Ser-286, Ser-296, and Ser-306. Thr-309 bears the Phosphothreonine mark. The region spanning 379–436 is the PP1-binding domain; the sequence is KRKRVTFGEDLSPEVFDESLPANTPLCKGGTPVRPRTVKTTSPLQSPVHEQFLQPNFD. 2 positions are modified to phosphoserine: Ser-390 and Ser-397. 4 disordered regions span residues 400–473, 489–545, 568–638, and 651–716; these read ANTP…NTCS, TRTS…KSYR, KPLL…QSQV, and ASER…PQSQ. At Thr-402 the chain carries Phosphothreonine. Ser-424 is subject to Phosphoserine. Composition is skewed to polar residues over residues 451-473 and 498-512; these read SFANLSLSKSSLSETPPGTNTCS and TLSSTGVCSSYTTQA. Residues 518–545 show a composition bias toward basic residues; sequence KMSRRKSREKKHTSAALPKKKQVLKSYR. A phosphoserine mark is found at Ser-572 and Ser-595. Residues 651–668 are compositionally biased toward polar residues; the sequence is ASERGPNASTRDTGSEGN. The segment covering 669–685 has biased composition (basic and acidic residues); the sequence is TRAESKCQSAKEPKPGT. A Phosphoserine modification is found at Ser-735. Lys-741 is covalently cross-linked (Glycyl lysine isopeptide (Lys-Gly) (interchain with G-Cter in SUMO2)). The disordered stretch occupies residues 910–982; the sequence is ECPSSKEETI…SLKGESAQLP (73 aa). A Phosphoserine modification is found at Ser-913. Positions 931–942 are enriched in low complexity; the sequence is VSGSESQGVGSS. Phosphoserine is present on Ser-950. Over residues 952–964 the composition is skewed to polar residues; it reads CGSTLTDANSATQ. Ser-973 carries the post-translational modification Phosphoserine.

In terms of assembly, interacts with PPP1CC. Phosphorylated by CDK1. May regulate its subcellular location.

The protein localises to the nucleus. Functionally, regulator of chromosome structure during mitosis required for condensin-depleted chromosomes to retain their compact architecture through anaphase. Acts by mediating the recruitment of phopsphatase PP1-gamma subunit (PPP1CC) to chromatin at anaphase and into the following interphase. At anaphase onset, its association with chromatin targets a pool of PPP1CC to dephosphorylate substrates. In Mus musculus (Mouse), this protein is Cell division cycle-associated protein 2 (Cdca2).